The following is a 188-amino-acid chain: Probable nicotinate-nucleotide adenylyltransferase (188 aa).

Belongs to the NadD family.

The catalysed reaction is nicotinate beta-D-ribonucleotide + ATP + H(+) = deamido-NAD(+) + diphosphate. Its pathway is cofactor biosynthesis; NAD(+) biosynthesis; deamido-NAD(+) from nicotinate D-ribonucleotide: step 1/1. Catalyzes the reversible adenylation of nicotinate mononucleotide (NaMN) to nicotinic acid adenine dinucleotide (NaAD). This is Probable nicotinate-nucleotide adenylyltransferase from Listeria monocytogenes serotype 4b (strain F2365).